Here is a 122-residue protein sequence, read N- to C-terminus: Large ribosomal subunit protein uL14 (122 aa).

This sequence belongs to the universal ribosomal protein uL14 family. As to quaternary structure, part of the 50S ribosomal subunit. Forms a cluster with proteins L3 and L19. In the 70S ribosome, L14 and L19 interact and together make contacts with the 16S rRNA in bridges B5 and B8.

In terms of biological role, binds to 23S rRNA. Forms part of two intersubunit bridges in the 70S ribosome. The polypeptide is Large ribosomal subunit protein uL14 (Chlorobium luteolum (strain DSM 273 / BCRC 81028 / 2530) (Pelodictyon luteolum)).